The primary structure comprises 242 residues: 1-(5-phosphoribosyl)-5-[(5-phosphoribosylamino)methylideneamino] imidazole-4-carboxamide isomerase (242 aa).

The Proton acceptor role is filled by Asp-10. The active-site Proton donor is Asp-131.

This sequence belongs to the HisA/HisF family.

The protein localises to the cytoplasm. The catalysed reaction is 1-(5-phospho-beta-D-ribosyl)-5-[(5-phospho-beta-D-ribosylamino)methylideneamino]imidazole-4-carboxamide = 5-[(5-phospho-1-deoxy-D-ribulos-1-ylimino)methylamino]-1-(5-phospho-beta-D-ribosyl)imidazole-4-carboxamide. Its pathway is amino-acid biosynthesis; L-histidine biosynthesis; L-histidine from 5-phospho-alpha-D-ribose 1-diphosphate: step 4/9. The chain is 1-(5-phosphoribosyl)-5-[(5-phosphoribosylamino)methylideneamino] imidazole-4-carboxamide isomerase from Granulibacter bethesdensis (strain ATCC BAA-1260 / CGDNIH1).